Here is a 417-residue protein sequence, read N- to C-terminus: Gamma-glutamyl phosphate reductase (417 aa).

The protein belongs to the gamma-glutamyl phosphate reductase family.

It localises to the cytoplasm. It carries out the reaction L-glutamate 5-semialdehyde + phosphate + NADP(+) = L-glutamyl 5-phosphate + NADPH + H(+). The protein operates within amino-acid biosynthesis; L-proline biosynthesis; L-glutamate 5-semialdehyde from L-glutamate: step 2/2. Functionally, catalyzes the NADPH-dependent reduction of L-glutamate 5-phosphate into L-glutamate 5-semialdehyde and phosphate. The product spontaneously undergoes cyclization to form 1-pyrroline-5-carboxylate. The sequence is that of Gamma-glutamyl phosphate reductase from Shigella boydii serotype 18 (strain CDC 3083-94 / BS512).